Here is a 423-residue protein sequence, read N- to C-terminus: MATQALEDITERLLIRSQEAILQLDLWIQRQQRSSICQTTDQESLDKLSQQYNQYMSQLNSLYVRSESVRDKLSKEQQRRLITEDNEHQRIEDLVREFQDITLRLNELATVPNEAPNDSPQSQSTRSSLGSFQPRPLKIIERQRLCMVTPSKPPKKSVGFNPINEVDCPSKTNSLPCSPKKQPARNRTLRAAKSHDTGLNKSKKPSSSDTYESFFKNRQRLSLTFFDEMDDEDFDSDQDTIILPNISTPPHVGVTAKGAEFEPLRRYNSHESILSNKPAPSKSLNLGSFSASFFRPSNPTFGTSISNVQVNCHPTVAATMAPSRNGPRISSSKALLSSFIARSDTHTVKENNTNLKHASFMDKFNSSLSTISESFQSKRGRKNKGMNEERISNHNVAQEQKNNMDISVSIEELQDALNTELLF.

Alanine 2 carries the post-translational modification N-acetylalanine. The disordered stretch occupies residues 109 to 134; the sequence is ATVPNEAPNDSPQSQSTRSSLGSFQP. An MYO2-binding region spans residues 110–170; sequence TVPNEAPNDS…NPINEVDCPS (61 aa). Positions 116 to 131 are enriched in polar residues; that stretch reads PNDSPQSQSTRSSLGS. At serine 119 the chain carries Phosphoserine. Threonine 149 bears the Phosphothreonine mark. Residues 150 to 211 are disordered; sequence PSKPPKKSVG…SKKPSSSDTY (62 aa). Position 178 is a phosphoserine (serine 178). Basic residues predominate over residues 182–192; it reads QPARNRTLRAA. Polar residues predominate over residues 199-211; that stretch reads LNKSKKPSSSDTY. Phosphothreonine is present on threonine 248. Serine 269 carries the post-translational modification Phosphoserine. A VAC8-binding region spans residues 290–380; it reads SASFFRPSNP…ISESFQSKRG (91 aa).

It belongs to the VAC17 family. Interacts with MYO2 and VAC8. Interacts with ATG18.

The protein resides in the vacuole membrane. Vacuole-specific MYO2 receptor required for vacuole inheritance. Binds simultaneously to MYO2 and to VAC8, a vacuolar membrane protein, forming a transport complex which moves the attached vacuole membrane along actin cables into the bud. Once the vacuole arrives in the bud, VAC17 is degraded, depositing the vacuole in its correct location. This is vacuole-related protein 17 (VAC17) from Saccharomyces cerevisiae (strain ATCC 204508 / S288c) (Baker's yeast).